Consider the following 297-residue polypeptide: rRNA 2'-O-methyltransferase fibrillarin (297 aa).

Residues 1-56 form a disordered region; that stretch reads MRGGFGRGGGGRGGSRGGRGGFGRGGGRGGGRGGGRGGGRGGGRGGGRGGGRGGAG. Residues Arg2, Arg7, Arg12, Arg16, Arg19, Arg24, Arg28, Arg32, Arg36, Arg40, Arg44, Arg48, and Arg52 each carry the asymmetric dimethylarginine modification. S-adenosyl-L-methionine-binding positions include 149–150, 168–169, 192–193, and 212–215; these read TT, EF, DA, and DVAQ.

This sequence belongs to the methyltransferase superfamily. Fibrillarin family. As to quaternary structure, component of box C/D small nucleolar ribonucleoprotein (snoRNP) particles. It is associated with the U3, U8 and U13 small nuclear RNAs. By homology to other fibrillarins, some or all of the N-terminal domain arginines are modified to asymmetric dimethylarginine (DMA).

The protein resides in the nucleus. The protein localises to the nucleolus. It carries out the reaction L-glutaminyl-[histone H2A] + S-adenosyl-L-methionine = N(5)-methyl-L-glutaminyl-[histone H2A] + S-adenosyl-L-homocysteine + H(+). S-adenosyl-L-methionine-dependent methyltransferase that has the ability to methylate both RNAs and proteins. Involved in pre-rRNA processing. Utilizes the methyl donor S-adenosyl-L-methionine to catalyze the site-specific 2'-hydroxyl methylation of ribose moieties in pre-ribosomal RNA. Site specificity is provided by a guide RNA that base pairs with the substrate. Methylation occurs at a characteristic distance from the sequence involved in base pairing with the guide RNA. Also acts as a protein methyltransferase by mediating methylation of 'Gln-105' of histone H2A (H2AQ105me), a modification that impairs binding of the FACT complex and is specifically present at 35S ribosomal DNA locus. This chain is rRNA 2'-O-methyltransferase fibrillarin, found in Leishmania major.